The chain runs to 692 residues: Potassium-transporting ATPase ATP-binding subunit (692 aa).

4 helical membrane-spanning segments follow: residues 50–70 (PIMF…FLPS), 74–94 (SIPG…VLFA), 240–260 (LTLI…YLGF), and 266–286 (VLVA…LSAI). Catalysis depends on D319, which acts as the 4-aspartylphosphate intermediate. Residues D356, E360, 388–395 (FKAETRMS), and K407 each bind ATP. 2 residues coordinate Mg(2+): D530 and D534. 3 helical membrane passes run 600–620 (FAII…LNIM), 628–648 (AILS…PLAM), and 672–692 (GGVI…GLFI).

This sequence belongs to the cation transport ATPase (P-type) (TC 3.A.3) family. Type IA subfamily. In terms of assembly, the system is composed of three essential subunits: KdpA, KdpB and KdpC.

The protein localises to the cell membrane. It catalyses the reaction K(+)(out) + ATP + H2O = K(+)(in) + ADP + phosphate + H(+). Part of the high-affinity ATP-driven potassium transport (or Kdp) system, which catalyzes the hydrolysis of ATP coupled with the electrogenic transport of potassium into the cytoplasm. This subunit is responsible for energy coupling to the transport system and for the release of the potassium ions to the cytoplasm. This Bacillus thuringiensis (strain Al Hakam) protein is Potassium-transporting ATPase ATP-binding subunit.